The following is an 833-amino-acid chain: MLGAIARKTVENRILVSRHLISSTSCLFKDNNEELLESIKERIARNRRILQKHSSSHLKAREVNASISNLRQSMAAVQKKQKAAHEPPANSIVNIPSQVSIEVLGNGTGLLRACFILRTPLKTYMFNCPENACRFLWQLRIRSSSVVDLFITSANWDNIAGISSILLSKESNALSTRLHGAMNIKHFLECIRPFQDSDYGSCKYPSQVEERPYTMENYEDAGLKVTYIPLSPPLNIGSNNEKSKNVKVNNVDIAFLIEMKEAARRIDTMKLMELKVPKGPLIGKLKSGEAVTLPDGRTIQPDQVFSSDKVEGDKPLLLVTECTTEDHVKALIDSSSLQPFLNGEKQLDYMVHISDDAVINTPTYRHLMEKLNNPSITHLLINGGNPVIPAVESVYKHTRLLRSIAPSLFPALHPIDWSGIITQNEELSQRQDQFIRVAPMQRYWMRRGASFNEEPIVNNLLAAEPELSDKAKELIKEYQKLEKENKMDCEFPKLTFFGTSSAVPSKYRNVTGYLVEASENSAILIDVGEGTYGQMRAVFGEDGCKQLLVNLNCVLITHAHQDHMNGLYTIIARRKEAFESLGAPYRPLVLVCNRNVLKPMKTYSICFENIEHLLEIVDISRYPLTPPGSPGGPPGKRPRLPSPHLPPSRDVLQDMSSSFDKKAWKLDELKAVQVHHTRMANGFVMRVAGKRIVFSGDTKPCDLLVEEGKDADVLVHESTFEDGHEADAMRKRHSTMGQAVDVGKRMNAKHIILTHFSARYPKVPVLPEYLDKENIGVAMDMLRVRFDHLPLVSKLLPIFREVFVAELFELTIKKEQRVLKDKELSEKRGQLKA.

The N-terminal 19 residues, 1-19 (MLGAIARKTVENRILVSRH), are a transit peptide targeting the mitochondrion. Over residues 624-646 (LTPPGSPGGPPGKRPRLPSPHLP) the composition is skewed to pro residues. Positions 624–652 (LTPPGSPGGPPGKRPRLPSPHLPPSRDVL) are disordered.

It belongs to the RNase Z family. Homodimer. Requires Zn(2+) as cofactor. In terms of tissue distribution, highly expressed in the germline.

Its subcellular location is the mitochondrion. It localises to the nucleus. The enzyme catalyses Endonucleolytic cleavage of RNA, removing extra 3' nucleotides from tRNA precursor, generating 3' termini of tRNAs. A 3'-hydroxy group is left at the tRNA terminus and a 5'-phosphoryl group is left at the trailer molecule.. Its function is as follows. Zinc phosphodiesterase, which displays some tRNA 3'-processing endonuclease activity. Probably involved in tRNA maturation, by removing a 3'-trailer from precursor tRNA. Involved in germline proliferation. May be required for both mitosis and meiosis in germ cells. Does not regulate the mitochondrial unfolded protein response following mitochondrial stress. In terms of biological role, plays a role in mitochondrial unfolded protein response. Upon mitochondrial stress is exported from the nucleus where its tRNA endonuclease activity is negatively regulated. In response to mitochondrial stress, might be involved in activating a transcriptional response in an ATFS-1- and DVE-1-dependent manner. May play a role in negatively regulating the mitochondrial membrane potential. The chain is Zinc phosphodiesterase ELAC protein 2 homolog from Caenorhabditis elegans.